We begin with the raw amino-acid sequence, 688 residues long: Potassium-transporting ATPase ATP-binding subunit (688 aa).

The next 4 membrane-spanning stretches (helical) occupy residues 35 to 55 (VMFV…QALG), 62 to 82 (AGFI…ANFA), 219 to 239 (IALT…IVTL), and 260 to 280 (VLIA…LSAI). Asp313 (4-aspartylphosphate intermediate) is an active-site residue. ATP contacts are provided by residues Asp350, Glu354, 383–390 (FSAHTRMS), and Lys401. Residues Asp524 and Asp528 each coordinate Mg(2+). The next 3 membrane-spanning stretches (helical) occupy residues 594-614 (FAII…LNVM), 622-642 (AILS…PLAL), and 668-688 (VIVP…VGLA).

The protein belongs to the cation transport ATPase (P-type) (TC 3.A.3) family. Type IA subfamily. As to quaternary structure, the system is composed of three essential subunits: KdpA, KdpB and KdpC.

It is found in the cell inner membrane. It catalyses the reaction K(+)(out) + ATP + H2O = K(+)(in) + ADP + phosphate + H(+). Functionally, part of the high-affinity ATP-driven potassium transport (or Kdp) system, which catalyzes the hydrolysis of ATP coupled with the electrogenic transport of potassium into the cytoplasm. This subunit is responsible for energy coupling to the transport system and for the release of the potassium ions to the cytoplasm. The sequence is that of Potassium-transporting ATPase ATP-binding subunit from Dechloromonas aromatica (strain RCB).